Here is a 503-residue protein sequence, read N- to C-terminus: Glutamate/gamma-aminobutyrate antiporter (503 aa).

Leu33–Gly43 is an L-glutamate binding site. 7 consecutive transmembrane segments (helical) span residues Leu35–Ala55, Phe153–Ile173, Val194–Ala214, Ile232–Val252, Leu366–Ile386, Ile407–Pro427, and Met440–His460.

Belongs to the amino acid-polyamine-organocation (APC) superfamily. Glutamate:GABA antiporter (GGA) (TC 2.A.3.7) family.

It is found in the cell membrane. It carries out the reaction 4-aminobutanoate(in) + L-glutamate(out) = 4-aminobutanoate(out) + L-glutamate(in). In terms of biological role, involved in glutaminase-dependent acid resistance. Exchanges extracellular glutamate (Glu) for intracellular gamma-aminobutyric acid (GABA) under acidic conditions. This Lactococcus lactis subsp. lactis (strain IL1403) (Streptococcus lactis) protein is Glutamate/gamma-aminobutyrate antiporter (gadC).